A 762-amino-acid polypeptide reads, in one-letter code: MAIQTSNLGYPRIGLQREWKKTLEAFWSNKIDEEQFLTTMKEIRLQHVKVQQEKGIELIPIGDFTYYDHVLDTAYMLGFIPSRFSEFTSYLDVYFAMARGSKDHVASEMTKWFNTNYHYIVPEYEEGLQISLKDNRPLRLYEEAKQELGVDGKPVILGPYTFLKLAKGYTQEQFPTILKQLVAPYVQLLSELHAAGAPAIQVDEPIFASLTKKEVQQAKEIYEAIRKEVPNATLLLQTYFDSVEENYEEIITFPVSGIGLDFIHGKEGNLNAISKYGFPADKTLAVGCIDGRNIWRADLDEVLELFTTLQKQVQTKDIIVQPSCSLLHTPIDKTEETHLSTELFDALAFANQKLEELVLIHSALTQGTESISNELETYRNVHHTIRSSAARNREDVKAARTALKEEDFSRPLPFEKRYELQQVALELPLLPTTTIGSFPQTTEVRQTRKEWRNGVISNEQYEQFIEKETEKWIRYQEEIGLDVLVHGEFERTDMVEYFGERLAGFSFTKNGWVQSYGSRCVKPPVIYGDVAFINGMTIKETVYAQSLTEKVVKGMLTGPVTILNWSFVRNDIPRKEVSYQIALALRHEIELLESSGIRVIQVDEPALREGMPLKEKDWDAYITWAVQSFLLATSSVANETQIHTHMCYSNFEDIVDAIRALDADVISIETSRSHGEFIDTLKHTTYEKGIGLGVYDIHSPRVPSKDEMYKIVEQSLEVCDPKYFWINPDCGLKTRRTEEVIPALEHMVQAAKDARSLLKTNA.

Residues 17 to 20 (REWK) and Lys111 each bind 5-methyltetrahydropteroyltri-L-glutamate. Residues 435-437 (IGS) and Glu488 contribute to the L-homocysteine site. Residues 435–437 (IGS) and Glu488 contribute to the L-methionine site. 5-methyltetrahydropteroyltri-L-glutamate is bound by residues 519–520 (RC) and Trp565. Position 603 (Asp603) interacts with L-homocysteine. Residue Asp603 coordinates L-methionine. Glu609 contributes to the 5-methyltetrahydropteroyltri-L-glutamate binding site. The Zn(2+) site is built by His645, Cys647, and Glu669. His698 acts as the Proton donor in catalysis. Residue Cys730 coordinates Zn(2+).

The protein belongs to the vitamin-B12 independent methionine synthase family. The cofactor is Zn(2+).

The catalysed reaction is 5-methyltetrahydropteroyltri-L-glutamate + L-homocysteine = tetrahydropteroyltri-L-glutamate + L-methionine. The protein operates within amino-acid biosynthesis; L-methionine biosynthesis via de novo pathway; L-methionine from L-homocysteine (MetE route): step 1/1. In terms of biological role, catalyzes the transfer of a methyl group from 5-methyltetrahydrofolate to homocysteine resulting in methionine formation. This is 5-methyltetrahydropteroyltriglutamate--homocysteine methyltransferase from Bacillus cereus (strain ATCC 14579 / DSM 31 / CCUG 7414 / JCM 2152 / NBRC 15305 / NCIMB 9373 / NCTC 2599 / NRRL B-3711).